We begin with the raw amino-acid sequence, 416 residues long: Glutamyl-tRNA reductase (416 aa).

Substrate-binding positions include 49–52 (TCNR), Ser-105, 110–112 (EPQ), and Gln-116. The active-site Nucleophile is the Cys-50. 185–190 (GAGETI) is an NADP(+) binding site.

Belongs to the glutamyl-tRNA reductase family. Homodimer.

The enzyme catalyses (S)-4-amino-5-oxopentanoate + tRNA(Glu) + NADP(+) = L-glutamyl-tRNA(Glu) + NADPH + H(+). The protein operates within porphyrin-containing compound metabolism; protoporphyrin-IX biosynthesis; 5-aminolevulinate from L-glutamyl-tRNA(Glu): step 1/2. Its function is as follows. Catalyzes the NADPH-dependent reduction of glutamyl-tRNA(Glu) to glutamate 1-semialdehyde (GSA). The chain is Glutamyl-tRNA reductase from Shewanella baltica (strain OS223).